Consider the following 611-residue polypeptide: MSSESPNLPAAAGTVPDNHPPPPPVVTAAEAGSDDSPKGVASKLSAAGISNWAKNLKVPQPFASTQNDSGVENTEKSAFAKFTSGLGIRLSPKSPQTNDTTTEGTSSATESSFIGTITKGLVDTSKNAVKAVQVKARHAVSQNKRRYQEGGFDLDLTYITENIIAMGFPAGDMSSGFFGYVEGFYRNQMEEVINFLETQHKGKYKVYNLCSERLYDVSLFEGKVASFPFDDHNCPPIHLVTSFCQSAYSWLKEDIENVVVVHCKAGMARTGLMICSLLLYLKFFPTAEECMDFYNQKRCVDGKGLVLPSQIRYVKYFERILTYFNGENQPGRRCMLRGFRLHRCPYWIRPSITISDHNGVLFTTKKHPRTKDLSPEDFWFSAPKKGVMVFALPGEPGLTELAGDFKIQFHDRQGDFYCWLNTTMMENRVILKTSELDGFDKRKLPSPGFMVEVVLADINATIPTNPSSETASKTPEETSAANSSPVDGSASVPGPDKETENPDKDDVFSDNEGDSTGPTKTTSSASSQTPEAKKSADETAVLTKATEKVSISGNKGSSQPVQGVTVSKGEATEKPSGAGVNASSSSESEFKVMAADASVFSFGDEDDFESD.

2 disordered regions span residues 1 to 42 and 87 to 109; these read MSSE…GVAS and GIRL…SSAT. Serine 91 carries the post-translational modification Phosphoserine. Residues 100-109 are compositionally biased toward low complexity; the sequence is TTTEGTSSAT. Residues 145–324 enclose the Phosphatase tensin-type domain; sequence RRYQEGGFDL…KYFERILTYF (180 aa). Residue cysteine 263 is the Phosphocysteine intermediate of the active site. One can recognise a C2 tensin-type domain in the interval 331–458; that stretch reads GRRCMLRGFR…FMVEVVLADI (128 aa). Positions 462–486 are enriched in polar residues; that stretch reads IPTNPSSETASKTPEETSAANSSPV. A disordered region spans residues 462–589; that stretch reads IPTNPSSETA…VNASSSSESE (128 aa). A compositionally biased stretch (basic and acidic residues) spans 495-507; it reads PDKETENPDKDDV. Residue serine 509 is modified to Phosphoserine. 2 stretches are compositionally biased toward polar residues: residues 514–530 and 549–565; these read DSTG…SQTP and VSIS…QGVT.

Belongs to the PTEN phosphatase protein family. In terms of tissue distribution, expressed in seedlings, roots, stems, leaves, flowers and siliques. However, at protein level, not observed in older leaves and mature siliques.

The enzyme catalyses O-phospho-L-tyrosyl-[protein] + H2O = L-tyrosyl-[protein] + phosphate. It carries out the reaction a 1,2-diacyl-sn-glycero-3-phospho-(1D-myo-inositol-3,4,5-trisphosphate) + H2O = a 1,2-diacyl-sn-glycero-3-phospho-(1D-myo-inositol-4,5-bisphosphate) + phosphate. Binds phosphatidic acid. Protein tyrosine phosphatase that also exhibits lipid phosphatase activity. Hydrolyzed poorly p-nitrophenyl phosphate (p-NPP). Can use PtdIns isomers as substrates. Removes efficiently phosphate from the D3 position of the inositol ring, less from the D4 position and not at all from the D5 position on monophosphorylated PtdIns isomers (PIPs). The presence of a phosphate group in the D5 position on PIP(2) isomers reduces lipid phosphatase activity. Mostly active on PtdIns(3)P and PtdIns(3,4)P(2), to a lower extent, on PtdIns(4)P and PtdIns(3,5)P(2), but barely against PtdIns(3,4,5)P(3) as substrate. The polypeptide is Phosphatidylinositol 3,4,5-trisphosphate 3-phosphatase and protein-tyrosine-phosphatase PTEN2A (Arabidopsis thaliana (Mouse-ear cress)).